A 54-amino-acid polypeptide reads, in one-letter code: ATP synthase F(0) complex subunit 8 (54 aa).

Residues 9–25 traverse the membrane as a helical segment; sequence WVFLFFLVWLVLGFLGL.

The protein belongs to the ATPase protein 8 family. In terms of assembly, component of the ATP synthase complex composed at least of ATP5F1A/subunit alpha, ATP5F1B/subunit beta, ATP5MC1/subunit c (homooctomer), MT-ATP6/subunit a, MT-ATP8/subunit 8, ATP5ME/subunit e, ATP5MF/subunit f, ATP5MG/subunit g, ATP5MK/subunit k, ATP5MJ/subunit j, ATP5F1C/subunit gamma, ATP5F1D/subunit delta, ATP5F1E/subunit epsilon, ATP5PF/subunit F6, ATP5PB/subunit b, ATP5PD/subunit d, ATP5PO/subunit OSCP. ATP synthase complex consists of a soluble F(1) head domain (subunits alpha(3) and beta(3)) - the catalytic core - and a membrane F(0) domain - the membrane proton channel (subunits c, a, 8, e, f, g, k and j). These two domains are linked by a central stalk (subunits gamma, delta, and epsilon) rotating inside the F1 region and a stationary peripheral stalk (subunits F6, b, d, and OSCP).

Its subcellular location is the mitochondrion membrane. In terms of biological role, subunit 8, of the mitochondrial membrane ATP synthase complex (F(1)F(0) ATP synthase or Complex V) that produces ATP from ADP in the presence of a proton gradient across the membrane which is generated by electron transport complexes of the respiratory chain. ATP synthase complex consist of a soluble F(1) head domain - the catalytic core - and a membrane F(1) domain - the membrane proton channel. These two domains are linked by a central stalk rotating inside the F(1) region and a stationary peripheral stalk. During catalysis, ATP synthesis in the catalytic domain of F(1) is coupled via a rotary mechanism of the central stalk subunits to proton translocation. In vivo, can only synthesize ATP although its ATP hydrolase activity can be activated artificially in vitro. Part of the complex F(0) domain. The protein is ATP synthase F(0) complex subunit 8 of Branchiostoma lanceolatum (Common lancelet).